The primary structure comprises 335 residues: UPF0324 membrane protein LMOf2365_2179 (335 aa).

8 helical membrane passes run threonine 10–leucine 28, phenylalanine 33–proline 55, alanine 91–leucine 113, leucine 123–isoleucine 142, valine 155–isoleucine 177, valine 251–isoleucine 270, phenylalanine 277–leucine 299, and proline 309–phenylalanine 331.

It belongs to the UPF0324 family.

It localises to the cell membrane. In Listeria monocytogenes serotype 4b (strain F2365), this protein is UPF0324 membrane protein LMOf2365_2179.